We begin with the raw amino-acid sequence, 84 residues long: Putative membrane protein insertion efficiency factor (84 aa).

It belongs to the UPF0161 family.

The protein resides in the cell inner membrane. Functionally, could be involved in insertion of integral membrane proteins into the membrane. This is Putative membrane protein insertion efficiency factor from Shewanella amazonensis (strain ATCC BAA-1098 / SB2B).